The sequence spans 360 residues: DNA integrity scanning protein DisA (360 aa).

In terms of domain architecture, DAC spans 9 to 147 (DDEIIEVLRM…GSRKYILRET (139 aa)). Residues G76, L94, and 107–111 (TRHKT) contribute to the ATP site.

This sequence belongs to the DisA family. As to quaternary structure, homooctamer. The cofactor is Mg(2+).

It catalyses the reaction 2 ATP = 3',3'-c-di-AMP + 2 diphosphate. Its function is as follows. Participates in a DNA-damage check-point that is active prior to asymmetric division when DNA is damaged. DisA forms globular foci that rapidly scan along the chromosomes during sporulation, searching for lesions. When a lesion is present, DisA pauses at the lesion site. This triggers a cellular response that culminates in a temporary block in sporulation initiation. In terms of biological role, also has diadenylate cyclase activity, catalyzing the condensation of 2 ATP molecules into cyclic di-AMP (c-di-AMP). c-di-AMP acts as a signaling molecule that couples DNA integrity with progression of sporulation. The rise in c-di-AMP level generated by DisA while scanning the chromosome, operates as a positive signal that advances sporulation; upon encountering a lesion, the DisA focus arrests at the damaged site and halts c-di-AMP synthesis. The sequence is that of DNA integrity scanning protein DisA from Acetivibrio thermocellus (strain ATCC 27405 / DSM 1237 / JCM 9322 / NBRC 103400 / NCIMB 10682 / NRRL B-4536 / VPI 7372) (Clostridium thermocellum).